The primary structure comprises 398 residues: Phosphoglycerate kinase (398 aa).

Substrate contacts are provided by residues 21–23 (DFN), arginine 36, 59–62 (HLGR), arginine 119, and arginine 157. Residues lysine 208, glycine 296, glutamate 327, and 354–357 (GGDS) each bind ATP.

The protein belongs to the phosphoglycerate kinase family. As to quaternary structure, monomer.

The protein localises to the cytoplasm. It carries out the reaction (2R)-3-phosphoglycerate + ATP = (2R)-3-phospho-glyceroyl phosphate + ADP. The protein operates within carbohydrate degradation; glycolysis; pyruvate from D-glyceraldehyde 3-phosphate: step 2/5. The chain is Phosphoglycerate kinase from Streptococcus pneumoniae (strain 70585).